The sequence spans 478 residues: NADH-quinone oxidoreductase subunit N (478 aa).

The next 13 helical transmembrane spans lie at 8–28, 38–58, 62–82, 106–126, 160–180, 200–220, 234–254, 268–288, 300–320, 322–342, 368–388, 398–418, and 445–465; these read LVLP…FGVW, ILWA…LGTG, AFGG…VILV, PILI…GDLM, FVLG…VYGF, IGLL…VSAV, PTPV…ALIA, WGQI…IAGI, SSIS…AAGV, SMLL…AFIL, AFAL…LGFF, IGAG…IGAF, and FAFL…MAGV.

This sequence belongs to the complex I subunit 2 family. In terms of assembly, NDH-1 is composed of 14 different subunits. Subunits NuoA, H, J, K, L, M, N constitute the membrane sector of the complex.

It is found in the cellular chromatophore membrane. The catalysed reaction is a quinone + NADH + 5 H(+)(in) = a quinol + NAD(+) + 4 H(+)(out). NDH-1 shuttles electrons from NADH, via FMN and iron-sulfur (Fe-S) centers, to quinones in the respiratory chain. The immediate electron acceptor for the enzyme in this species is believed to be ubiquinone. Couples the redox reaction to proton translocation (for every two electrons transferred, four hydrogen ions are translocated across the cytoplasmic membrane), and thus conserves the redox energy in a proton gradient. The protein is NADH-quinone oxidoreductase subunit N of Rhodobacter capsulatus (Rhodopseudomonas capsulata).